The chain runs to 258 residues: Apolipoprotein A-I (258 aa).

The signal sequence occupies residues 1–18 (MKFLVLALTILLAAGTQA). Residues 32 to 63 (VKAALNMYIAQVKLTAQRSIDLLDDTEYKEYK) form a 3 X approximate tandem repeats region. Tandem repeats lie at residues 64 to 85 (MQLSQSLDNLQQFADSTSKSWP) and 86 to 106 (PTPRSSAPSCDATATVRAEVM). The tract at residues 64 to 258 (MQLSQSLDNL…WLSTRPSARP (195 aa)) is 10 X approximate tandem repeats. The stretch at 107-117 (KDVEDVRTQLE) is one 3; half-length repeat. 7 repeat units span residues 118–139 (PKRAELTEVLNKHIDEYRKKLE), 140–161 (PLIKQHIELRRTEMDAFRAKID), 162–183 (PVVEEMRAKVAVNVEETKTKLM), 184–205 (PIVEIVRAKLTERLEELRTLAA), 206–227 (PYAEEYKEQMFKAVGEVREKVA), 228–238 (PLSEDFKARWA), and 239–258 (PPPRRPSKSSWLSTRPSARP). The segment at 233 to 258 (FKARWAPPPRRPSKSSWLSTRPSARP) is disordered. Residues 246–258 (KSSWLSTRPSARP) are compositionally biased toward polar residues.

Belongs to the apolipoprotein A1/A4/E family. As to expression, major protein of plasma HDL, also found in chylomicrons. Expressed in liver, intestine and muscle.

The protein resides in the secreted. Participates in the reverse transport of cholesterol from tissues to the liver for excretion by promoting cholesterol efflux from tissues and by acting as a cofactor for the lecithin cholesterol acyltransferase (LCAT). This Salmo salar (Atlantic salmon) protein is Apolipoprotein A-I (apoa1).